The primary structure comprises 401 residues: Glucose/mannose transporter GlcP (401 aa).

Transmembrane regions (helical) follow at residues 11–31 (AFFF…PFLL), 43–63 (VIIF…PLMI), 78–98 (IMLV…IIVM), 99–119 (AFLL…FVIA), 132–152 (EVLF…FIDI), 156–176 (FLPY…WLIF), 212–232 (LGFF…FANF), 247–267 (LISV…IGFV), 278–298 (LFSC…SNPI), 306–326 (LIGL…SIII), 336–356 (LFIA…GWSL), and 360–380 (TILL…GISV).

It belongs to the major facilitator superfamily.

It localises to the cell membrane. Functionally, can transport glucose, mannose, 2-deoxyglucose and methyl alpha-glucoside, but not galactose. The chain is Glucose/mannose transporter GlcP (glcP) from Bacillus subtilis (strain 168).